A 110-amino-acid chain; its full sequence is MNLQEILKEIDFKKGSDLIPTIIQDFYSGEVLMLAYMNKESLEKTIETNTTWFWSRSREELWNKGATSGHFQYVKSIHIDCDGDTLLIKVEQLGPACHTGHRSCFYTPLI.

Residue aspartate 80 coordinates Mg(2+). Cysteine 81 is a Zn(2+) binding site. Aspartate 82 and aspartate 84 together coordinate Mg(2+). The Zn(2+) site is built by cysteine 97 and cysteine 104.

Belongs to the PRA-CH family. Homodimer. Mg(2+) is required as a cofactor. Zn(2+) serves as cofactor.

The protein resides in the cytoplasm. It carries out the reaction 1-(5-phospho-beta-D-ribosyl)-5'-AMP + H2O = 1-(5-phospho-beta-D-ribosyl)-5-[(5-phospho-beta-D-ribosylamino)methylideneamino]imidazole-4-carboxamide. Its pathway is amino-acid biosynthesis; L-histidine biosynthesis; L-histidine from 5-phospho-alpha-D-ribose 1-diphosphate: step 3/9. Functionally, catalyzes the hydrolysis of the adenine ring of phosphoribosyl-AMP. This is Phosphoribosyl-AMP cyclohydrolase from Clostridium botulinum (strain Kyoto / Type A2).